The following is a 64-amino-acid chain: Large ribosomal subunit protein bL35 (64 aa).

The tract at residues 22 to 44 (IMKQQAGMRHNLEVKSSKRKARL) is disordered.

It belongs to the bacterial ribosomal protein bL35 family.

The protein is Large ribosomal subunit protein bL35 of Clavibacter sepedonicus (Clavibacter michiganensis subsp. sepedonicus).